A 230-amino-acid polypeptide reads, in one-letter code: Cytochrome b6-f complex iron-sulfur subunit, chloroplastic (230 aa).

Residues 1–51 constitute a chloroplast transit peptide; sequence MASFTLSSATPSQLCSSKNGMFAPSLALAKAGRVNVLISKERIRGMKLTCQ. The chain crosses the membrane as a helical span at residues 73–93; the sequence is LLGALSLPTGYMLLPYASFFV. Positions 116–212 constitute a Rieske domain; the sequence is AAEWLKTHAP…CDVDDGKVVF (97 aa). Positions 158, 160, 176, and 179 each coordinate [2Fe-2S] cluster. Cysteine 163 and cysteine 178 form a disulfide bridge.

It belongs to the Rieske iron-sulfur protein family. As to quaternary structure, the 4 large subunits of the cytochrome b6-f complex are cytochrome b6, subunit IV (17 kDa polypeptide, petD), cytochrome f and the Rieske protein, while the 4 small subunits are petG, petL, petM and petN. The complex functions as a dimer. [2Fe-2S] cluster serves as cofactor.

It is found in the plastid. It localises to the chloroplast thylakoid membrane. It carries out the reaction 2 oxidized [plastocyanin] + a plastoquinol + 2 H(+)(in) = 2 reduced [plastocyanin] + a plastoquinone + 4 H(+)(out). In terms of biological role, component of the cytochrome b6-f complex, which mediates electron transfer between photosystem II (PSII) and photosystem I (PSI), cyclic electron flow around PSI, and state transitions. The chain is Cytochrome b6-f complex iron-sulfur subunit, chloroplastic (petC) from Spinacia oleracea (Spinach).